The sequence spans 649 residues: MAIFFLPTVLSGFAPHSEEVFKSPARFSWSNLTPSELKNRFVGLSTKTNALGKAYFTLEGHKFMIVGGSIHYFRVPREYWKDRLLKLQACGFNTVTTYIPWNLHEQERGKFDFSEILDLEAYVLLAKTIGLWVILRPGPYICAEVDLGGLPSWLLRNPVTDLRTTNKGFIEAVDKYFDHLIPKILPLQYRHGGPVIAVQVENEYGSFQKDRNYMNYLKKALLKRGIVELLLTSDDKDGIQIGSVNGALTTINMNSFTKDSFIKLHKMQSDKPIMIMEYWTGWYDSWGSKHIEKSAEEIRHTVYKFISYGLSFNMYMFHGGTNFGFINGGRYENHHISVVTSYDYDAVLSEAGDYTEKYFKLRKLFASGSARPLPPLPPLIPKAIYPSVNLSFYLPLFDILPYLNQPVMLHTPVTMENLPINNGSGQPFGLVLYETSICSGGSLFASVHDSAQVFLNDQSIGILDENHEVLQIPKIQGCQLLRILVENQGRINYSWRIQSEQKGLKEVVSIDGLLLTNFTIYSLDMKMSFFKRLRSASWRLAPKTYNGPAFYWGILNAGSSPTDTFLHLPNWHYGFVFINGRNLGRYWDIGPQRTLYLPGPWLHPEDNEVIVFEKIEKGFDIQTRKKPQLQECYETGSGLPDAAGDADPC.

Glu-203 acts as the Proton donor in catalysis. Glu-277 serves as the catalytic Nucleophile.

Belongs to the glycosyl hydrolase 35 family.

The sequence is that of Beta-galactosidase-1-like protein 3 (Glb1l3) from Mus musculus (Mouse).